A 120-amino-acid chain; its full sequence is MGVLRSSFVAMMVMYMVLATTPNAEAVLTCGQVTGALAPCLGYLRSQVNVPVPLTCCNVVRGLNNAARTTLDKRTACGCLKQTANAVTGLNLNAAAGLPARCGVNIPYKISPTTDCNRVV.

A signal peptide spans 1–26; sequence MGVLRSSFVAMMVMYMVLATTPNAEA. 4 cysteine pairs are disulfide-bonded: C30–C79, C40–C56, C57–C102, and C77–C116.

This sequence belongs to the plant LTP family. In terms of tissue distribution, expressed in protoderm cells of somatic and zygotic embryos, and transiently expressed in epidermal cell layers of leaves, flowers and seeds.

Functionally, plant non-specific lipid-transfer proteins transfer phospholipids as well as galactolipids across membranes. May play a role in wax or cutin deposition in the cell walls of expanding epidermal cells and certain secretory tissues. The polypeptide is Non-specific lipid-transfer protein (EP2) (Daucus carota (Wild carrot)).